A 1288-amino-acid chain; its full sequence is VWFA and cache domain-containing protein 1 (1288 aa).

The signal sequence occupies residues 1-49 (MAREPEEEETVRPAAVVRRCPRCPGWPGAPRPPLWLLCLVACWILGAVA). Residues 50–1109 (DADFSILDEA…ITLNMIKSAP (1060 aa)) lie on the Extracellular side of the membrane. Asparagine 159 carries N-linked (GlcNAc...) asparagine glycosylation. The VWFA domain occupies 242–457 (HIVVILDHGA…TTVGRFYTNL (216 aa)). Cache domains follow at residues 467–546 (FSLP…SEPP) and 786–867 (LTGP…HPTL). Residues 1110–1130 (VGPVAGGIMGCIMVLVLAVYA) traverse the membrane as a helical segment. Over 1131-1288 (YRHQIHRRSH…VTVHTVDAEC (158 aa)) the chain is Cytoplasmic. Disordered stretches follow at residues 1157–1176 (NLENDRDERDDDSHEDRGII) and 1187–1237 (ERHV…VDVG). Basic and acidic residues predominate over residues 1159-1174 (ENDRDERDDDSHEDRG). Over residues 1210 to 1229 (GYSTMSPQEDSENPPCNNDP) the composition is skewed to polar residues.

The protein belongs to the calcium channel subunit alpha-2/delta family.

The protein resides in the membrane. Its function is as follows. May regulate voltage-dependent calcium channels. In Mus musculus (Mouse), this protein is VWFA and cache domain-containing protein 1 (Cachd1).